Consider the following 417-residue polypeptide: NADH-quinone oxidoreductase subunit D (417 aa).

This sequence belongs to the complex I 49 kDa subunit family. NDH-1 is composed of 14 different subunits. Subunits NuoB, C, D, E, F, and G constitute the peripheral sector of the complex.

It localises to the cell inner membrane. The catalysed reaction is a quinone + NADH + 5 H(+)(in) = a quinol + NAD(+) + 4 H(+)(out). NDH-1 shuttles electrons from NADH, via FMN and iron-sulfur (Fe-S) centers, to quinones in the respiratory chain. The immediate electron acceptor for the enzyme in this species is believed to be ubiquinone. Couples the redox reaction to proton translocation (for every two electrons transferred, four hydrogen ions are translocated across the cytoplasmic membrane), and thus conserves the redox energy in a proton gradient. The chain is NADH-quinone oxidoreductase subunit D from Hydrogenovibrio crunogenus (strain DSM 25203 / XCL-2) (Thiomicrospira crunogena).